The sequence spans 128 residues: Glycine cleavage system H protein (128 aa).

The Lipoyl-binding domain occupies 24–106 (VYSVGITEHA…YTDGWLFSIK (83 aa)). Lysine 65 carries the N6-lipoyllysine modification.

The protein belongs to the GcvH family. As to quaternary structure, the glycine cleavage system is composed of four proteins: P, T, L and H. (R)-lipoate serves as cofactor.

The glycine cleavage system catalyzes the degradation of glycine. The H protein shuttles the methylamine group of glycine from the P protein to the T protein. This Yersinia enterocolitica serotype O:8 / biotype 1B (strain NCTC 13174 / 8081) protein is Glycine cleavage system H protein.